Reading from the N-terminus, the 291-residue chain is Undecaprenyl-diphosphatase (291 aa).

Helical transmembrane passes span 1–21 (MIII…LTEF), 48–68 (SAFT…AWVF), 100–120 (LHVL…DDFI), 124–144 (LFSV…MIIA), 160–180 (INYV…WPGF), 201–221 (SDFT…LSLV), 230–250 (AHIP…LIAI), and 270–290 (IVLV…QGIS).

This sequence belongs to the UppP family.

It is found in the cell membrane. The enzyme catalyses di-trans,octa-cis-undecaprenyl diphosphate + H2O = di-trans,octa-cis-undecaprenyl phosphate + phosphate + H(+). Functionally, catalyzes the dephosphorylation of undecaprenyl diphosphate (UPP). Confers resistance to bacitracin. The chain is Undecaprenyl-diphosphatase from Staphylococcus haemolyticus (strain JCSC1435).